A 437-amino-acid polypeptide reads, in one-letter code: Phosphoribosylamine--glycine ligase (437 aa).

Positions 109 to 316 constitute an ATP-grasp domain; it reads KDFLARHGIP…LLDLIEAALN (208 aa). 135–196 is a binding site for ATP; the sequence is VRQQGAPIVI…EEYLDGEEAS (62 aa). Mg(2+) contacts are provided by Glu286 and Asn288.

The protein belongs to the GARS family. It depends on Mg(2+) as a cofactor. The cofactor is Mn(2+).

It carries out the reaction 5-phospho-beta-D-ribosylamine + glycine + ATP = N(1)-(5-phospho-beta-D-ribosyl)glycinamide + ADP + phosphate + H(+). It functions in the pathway purine metabolism; IMP biosynthesis via de novo pathway; N(1)-(5-phospho-D-ribosyl)glycinamide from 5-phospho-alpha-D-ribose 1-diphosphate: step 2/2. The polypeptide is Phosphoribosylamine--glycine ligase (Xylella fastidiosa (strain 9a5c)).